The primary structure comprises 588 residues: Pescadillo homolog (588 aa).

The segment at M1 to V54 is required for 28S ribosomal RNA processing. The segment at M1–E257 is sufficient for nucleolar localization. K98 carries the N6-acetyllysine modification. The tract at residues E294–R314 is disordered. The interval M306–S415 is sufficient for interaction with MAP1B. Residues K322–S415 form the BRCT domain. Residues G448–T515 are disordered. Residues E456–A486 are compositionally biased toward acidic residues. A compositionally biased stretch (basic and acidic residues) spans G487–K508. Residue K517 forms a Glycyl lysine isopeptide (Lys-Gly) (interchain with G-Cter in SUMO1); alternate linkage. A Glycyl lysine isopeptide (Lys-Gly) (interchain with G-Cter in SUMO2); alternate cross-link involves residue K517. The required for 28S ribosomal RNA processing stretch occupies residues M539–E588. Positions L565–E588 are disordered.

This sequence belongs to the pescadillo family. In terms of assembly, component of the PeBoW complex, composed of BOP1, PES1 and WDR12. The complex is held together by BOP1, which interacts with PES1 via its N-terminal domain and with WDR12 via a high-affinity interaction between the seven-bladed beta-propeller domains of the 2 proteins. The PeBoW complex associates with the 66S pre-ribosome. The PeBoW complex also associates with DDX27, PES1 interacts directly with DDX27. Interacts with IRS1 and UBTF. May interact with MAP1B. Sumoylated. In terms of tissue distribution, significant levels are detected in a variety of cancer cell lines, including glioblastoma, breast carcinoma, colon carcinoma and cervical carcinoma cells. Levels are abnormally elevated in malignant tumors of astrocytic origin.

It is found in the nucleus. The protein localises to the nucleolus. It localises to the nucleoplasm. The protein resides in the chromosome. In terms of biological role, component of the PeBoW complex, which is required for maturation of 28S and 5.8S ribosomal RNAs and formation of the 60S ribosome. The sequence is that of Pescadillo homolog from Homo sapiens (Human).